The sequence spans 96 residues: MENKLLSSQEIQELRKSLPTWEEAEGKLVKRFKFTNFIEAFGFMTKIAIISESLSHHPEWTNIYSEVIIRLSTHDMGGITMLDYKLAKAIDAIKYE.

It belongs to the pterin-4-alpha-carbinolamine dehydratase family.

It catalyses the reaction (4aS,6R)-4a-hydroxy-L-erythro-5,6,7,8-tetrahydrobiopterin = (6R)-L-erythro-6,7-dihydrobiopterin + H2O. The protein is Putative pterin-4-alpha-carbinolamine dehydratase of Prochlorococcus marinus (strain SARG / CCMP1375 / SS120).